The sequence spans 124 residues: Small ribosomal subunit protein uS12 (124 aa).

Residue Asp89 is modified to 3-methylthioaspartic acid.

This sequence belongs to the universal ribosomal protein uS12 family. In terms of assembly, part of the 30S ribosomal subunit. Contacts proteins S8 and S17. May interact with IF1 in the 30S initiation complex.

Functionally, with S4 and S5 plays an important role in translational accuracy. In terms of biological role, interacts with and stabilizes bases of the 16S rRNA that are involved in tRNA selection in the A site and with the mRNA backbone. Located at the interface of the 30S and 50S subunits, it traverses the body of the 30S subunit contacting proteins on the other side and probably holding the rRNA structure together. The combined cluster of proteins S8, S12 and S17 appears to hold together the shoulder and platform of the 30S subunit. The sequence is that of Small ribosomal subunit protein uS12 from Prochlorococcus marinus (strain SARG / CCMP1375 / SS120).